The following is a 226-amino-acid chain: MARTKAAASSQLGLELTQTVAVVQRLCGVDEAGRGPLAGPVYAAAVVLNPARQIRGLADSKILSAEKREALFDRICDHALGWHIASASVEEIDSINILHASMLAMQRAVQGLAASGVIPDLVQVDGNRCPQVAFPVEAIVKGDAKVRAISAASILAKVARDRELLKLHQEYPEYGFDSHFGYPTPQHFTALEQFGATPHHRRSFAPVRKVLERGMVRTMSSEAPPF.

Positions 24-216 constitute an RNase H type-2 domain; the sequence is QRLCGVDEAG…VRKVLERGMV (193 aa). A divalent metal cation-binding residues include Asp-30, Glu-31, and Asp-125.

The protein belongs to the RNase HII family. Mn(2+) is required as a cofactor. It depends on Mg(2+) as a cofactor.

It localises to the cytoplasm. It carries out the reaction Endonucleolytic cleavage to 5'-phosphomonoester.. In terms of biological role, endonuclease that specifically degrades the RNA of RNA-DNA hybrids. This is Ribonuclease HII from Cupriavidus metallidurans (strain ATCC 43123 / DSM 2839 / NBRC 102507 / CH34) (Ralstonia metallidurans).